Reading from the N-terminus, the 160-residue chain is DNA topoisomerase small subunit (160 aa).

As to quaternary structure, part of the DNA topoisomerase complex made of gp39, gp52 and gp60. Requires Mg(2+) as cofactor.

It catalyses the reaction ATP-dependent breakage, passage and rejoining of double-stranded DNA.. Its function is as follows. Small subunit of the DNA topoisomerase that untwists superhelical DNA. Controls topological states of double-stranded DNA by transient breakage and subsequent rejoining of DNA strands. This Enterobacteria phage T4 (Bacteriophage T4) protein is DNA topoisomerase small subunit (60).